Here is a 24-residue protein sequence, read N- to C-terminus: Coenzyme PQQ synthesis protein A (24 aa).

The pyrroloquinoline quinone (Glu-Tyr) cross-link spans 16-20; the sequence is EVTMY.

Belongs to the PqqA family.

It participates in cofactor biosynthesis; pyrroloquinoline quinone biosynthesis. Required for coenzyme pyrroloquinoline quinone (PQQ) biosynthesis. PQQ is probably formed by cross-linking a specific glutamate to a specific tyrosine residue and excising these residues from the peptide. This chain is Coenzyme PQQ synthesis protein A, found in Pseudomonas syringae pv. syringae (strain B728a).